Consider the following 515-residue polypeptide: 2-isopropylmalate synthase (515 aa).

A Pyruvate carboxyltransferase domain is found at 5-267; sequence VIIFDTTLRD…RTGINHEEIH (263 aa). Residues Asp14, His202, His204, and Asn238 each coordinate Mn(2+). The interval 392 to 515 is regulatory domain; the sequence is KLNYLSVQSG…EMKQKKIATV (124 aa).

Belongs to the alpha-IPM synthase/homocitrate synthase family. LeuA type 1 subfamily. In terms of assembly, homodimer. Requires Mn(2+) as cofactor.

Its subcellular location is the cytoplasm. It catalyses the reaction 3-methyl-2-oxobutanoate + acetyl-CoA + H2O = (2S)-2-isopropylmalate + CoA + H(+). It functions in the pathway amino-acid biosynthesis; L-leucine biosynthesis; L-leucine from 3-methyl-2-oxobutanoate: step 1/4. Catalyzes the condensation of the acetyl group of acetyl-CoA with 3-methyl-2-oxobutanoate (2-ketoisovalerate) to form 3-carboxy-3-hydroxy-4-methylpentanoate (2-isopropylmalate). This is 2-isopropylmalate synthase from Vibrio vulnificus (strain CMCP6).